The primary structure comprises 168 residues: GPI-anchored protein LLG1 (168 aa).

A signal peptide spans 1 to 23 (MELLSRALFFFLLLSVLSSFSSS). N-linked (GlcNAc...) asparagine glycosylation occurs at Asn-57. Asn-144 carries the GPI-anchor amidated asparagine lipid modification. The propeptide at 145 to 168 (AATTSSSRLWLTVSAALLVFVKLF) is removed in mature form.

As to quaternary structure, interacts with FER. In terms of tissue distribution, expressed in pollen, pollen tubes, sporophytic pistil tissues, in the early stages of female gametophyte development, and in unfertilized, mature ovules. Expressed in roots, lateral roots, shoots, cotyledons, petioles, developing leaves and anther filaments.

The protein resides in the cell membrane. Component of the FER-regulated Rho GTPase signaling complex. Acts as a chaperone and coreceptor for FER. Required for localization of FER to the plasma membrane. In Arabidopsis thaliana (Mouse-ear cress), this protein is GPI-anchored protein LLG1.